A 183-amino-acid polypeptide reads, in one-letter code: Putative 3-methyladenine DNA glycosylase (183 aa).

This sequence belongs to the DNA glycosylase MPG family.

In Rickettsia africae (strain ESF-5), this protein is Putative 3-methyladenine DNA glycosylase.